Reading from the N-terminus, the 110-residue chain is Large ribosomal subunit protein uL24 (110 aa).

Belongs to the universal ribosomal protein uL24 family. As to quaternary structure, part of the 50S ribosomal subunit.

In terms of biological role, one of two assembly initiator proteins, it binds directly to the 5'-end of the 23S rRNA, where it nucleates assembly of the 50S subunit. One of the proteins that surrounds the polypeptide exit tunnel on the outside of the subunit. This is Large ribosomal subunit protein uL24 from Desulfovibrio desulfuricans (strain ATCC 27774 / DSM 6949 / MB).